The sequence spans 87 residues: Small ribosomal subunit protein bS20 (87 aa).

This sequence belongs to the bacterial ribosomal protein bS20 family.

Functionally, binds directly to 16S ribosomal RNA. The protein is Small ribosomal subunit protein bS20 of Lachnoclostridium phytofermentans (strain ATCC 700394 / DSM 18823 / ISDg) (Clostridium phytofermentans).